The sequence spans 475 residues: Squamosa promoter-binding-like protein 12 (475 aa).

The disordered stretch occupies residues Asn-49 to Ser-73. Residues Gly-51 to Ser-73 show a composition bias toward low complexity. Residues Ser-177–Pro-254 form an SBP-type zinc finger. Zn(2+)-binding residues include Cys-180, Cys-185, Cys-202, His-205, Cys-221, Cys-224, His-228, and Cys-240. The short motif at Lys-237–Lys-253 is the Bipartite nuclear localization signal element. The segment at Gly-437–His-475 is disordered. Over residues Asn-465–His-475 the composition is skewed to polar residues.

As to expression, expressed in young panicles.

Its subcellular location is the nucleus. Trans-acting factor that binds specifically to the consensus nucleotide sequence 5'-TNCGTACAA-3'. May be involved in panicle development. This Oryza sativa subsp. japonica (Rice) protein is Squamosa promoter-binding-like protein 12 (SPL12).